We begin with the raw amino-acid sequence, 246 residues long: UDP-N-acetyl-D-mannosaminuronic acid transferase (246 aa).

This sequence belongs to the glycosyltransferase 26 family.

It catalyses the reaction UDP-N-acetyl-alpha-D-mannosaminouronate + N-acetyl-alpha-D-glucosaminyl-di-trans,octa-cis-undecaprenyl diphosphate = beta-D-ManNAcA-(1-&gt;4)-alpha-D-GlcNAc-di-trans,octa-cis-undecaprenyl diphosphate + UDP + H(+). It participates in bacterial outer membrane biogenesis; enterobacterial common antigen biosynthesis. Its function is as follows. Catalyzes the synthesis of Und-PP-GlcNAc-ManNAcA (Lipid II), the second lipid-linked intermediate involved in enterobacterial common antigen (ECA) synthesis. This Salmonella dublin (strain CT_02021853) protein is UDP-N-acetyl-D-mannosaminuronic acid transferase.